A 134-amino-acid chain; its full sequence is Ribonuclease P protein component (134 aa).

The protein belongs to the RnpA family. Consists of a catalytic RNA component (M1 or rnpB) and a protein subunit.

The enzyme catalyses Endonucleolytic cleavage of RNA, removing 5'-extranucleotides from tRNA precursor.. Functionally, RNaseP catalyzes the removal of the 5'-leader sequence from pre-tRNA to produce the mature 5'-terminus. It can also cleave other RNA substrates such as 4.5S RNA. The protein component plays an auxiliary but essential role in vivo by binding to the 5'-leader sequence and broadening the substrate specificity of the ribozyme. The polypeptide is Ribonuclease P protein component (Ectopseudomonas mendocina (strain ymp) (Pseudomonas mendocina)).